The sequence spans 138 residues: Small ribosomal subunit protein uS11 (138 aa).

Disordered stretches follow at residues 1-29 (MPPKKASGTGPKKGQKTRRREKKNVPHGA) and 117-138 (GAISDVTPQPHNGVRPPKRRRV). Over residues 13–22 (KGQKTRRREK) the composition is skewed to basic residues.

This sequence belongs to the universal ribosomal protein uS11 family. Part of the 30S ribosomal subunit. Interacts with proteins S7 and S18. Binds to IF-3.

Its function is as follows. Located on the platform of the 30S subunit, it bridges several disparate RNA helices of the 16S rRNA. Forms part of the Shine-Dalgarno cleft in the 70S ribosome. The polypeptide is Small ribosomal subunit protein uS11 (Mycobacterium ulcerans (strain Agy99)).